Consider the following 204-residue polypeptide: Holliday junction branch migration complex subunit RuvA (204 aa).

The domain I stretch occupies residues 1 to 64 (MIGRLRGILL…EDAQLLYGFN (64 aa)). The segment at 65–143 (TVKERALFRE…GWGAGDLFTP (79 aa)) is domain II. The interval 144–155 (FTDAAPTDSAAA) is flexible linker. The segment at 156-204 (SSNSAEEEAVSALLALGYKPTQASKVVSQIAKPDMSSEQLIREALKSMV) is domain III.

The protein belongs to the RuvA family. In terms of assembly, homotetramer. Forms an RuvA(8)-RuvB(12)-Holliday junction (HJ) complex. HJ DNA is sandwiched between 2 RuvA tetramers; dsDNA enters through RuvA and exits via RuvB. An RuvB hexamer assembles on each DNA strand where it exits the tetramer. Each RuvB hexamer is contacted by two RuvA subunits (via domain III) on 2 adjacent RuvB subunits; this complex drives branch migration. In the full resolvosome a probable DNA-RuvA(4)-RuvB(12)-RuvC(2) complex forms which resolves the HJ.

Its subcellular location is the cytoplasm. The RuvA-RuvB-RuvC complex processes Holliday junction (HJ) DNA during genetic recombination and DNA repair, while the RuvA-RuvB complex plays an important role in the rescue of blocked DNA replication forks via replication fork reversal (RFR). RuvA specifically binds to HJ cruciform DNA, conferring on it an open structure. The RuvB hexamer acts as an ATP-dependent pump, pulling dsDNA into and through the RuvAB complex. HJ branch migration allows RuvC to scan DNA until it finds its consensus sequence, where it cleaves and resolves the cruciform DNA. This is Holliday junction branch migration complex subunit RuvA from Vibrio parahaemolyticus serotype O3:K6 (strain RIMD 2210633).